Here is a 616-residue protein sequence, read N- to C-terminus: ATP-dependent RNA helicase VAD1 (616 aa).

Positions M1–G35 are disordered. Positions S36 to E64 match the Q motif motif. The 172-residue stretch at I67–I238 folds into the Helicase ATP-binding domain. Position 80–87 (A80–T87) interacts with ATP. Residues D186–D189 carry the DEAD box motif. One can recognise a Helicase C-terminal domain in the interval G248–L408. Residues E416–A616 are disordered. 3 stretches are compositionally biased toward low complexity: residues A427–R441, P458–P500, and Y508–Q523. Over residues P529 to T545 the composition is skewed to polar residues. Low complexity-rich tracts occupy residues P550–G579 and A606–A616.

It belongs to the DEAD box helicase family. DDX6/DHH1 subfamily.

It is found in the cytoplasm. The protein resides in the P-body. It carries out the reaction ATP + H2O = ADP + phosphate + H(+). Functionally, ATP-dependent RNA helicase involved in mRNA turnover, and more specifically in mRNA decapping. Is involved in G1/S DNA-damage checkpoint recovery, probably through the regulation of the translational status of a subset of mRNAs. May also have a role in translation and mRNA nuclear export. Blocks autophagy in nutrient-rich conditions by, at least partly, binding and repressing the expression of a set of ATG genes, including ATG3, ATG7, ATG8, ATG19, ATG20 and ATG22. VAD1-mediated repression of autophagy is regulated by TOR-dependent phosphorylation of the decapping enzyme DCP2. Regulates multiple virulence-associated genes. Repression of autophagy by VAD1 also regulates the pathogenesis. In Cryptococcus neoformans var. grubii serotype A (strain H99 / ATCC 208821 / CBS 10515 / FGSC 9487) (Filobasidiella neoformans var. grubii), this protein is ATP-dependent RNA helicase VAD1.